Reading from the N-terminus, the 207-residue chain is Cytochrome c biogenesis ATP-binding export protein CcmA 1 (207 aa).

One can recognise an ABC transporter domain in the interval 6–207 (LEALDLAGVR…KTSQTVRMGA (202 aa)). Residue 38–45 (GENGSGKT) participates in ATP binding.

This sequence belongs to the ABC transporter superfamily. CcmA exporter (TC 3.A.1.107) family. In terms of assembly, the complex is composed of two ATP-binding proteins (CcmA) and two transmembrane proteins (CcmB).

Its subcellular location is the cell inner membrane. It catalyses the reaction heme b(in) + ATP + H2O = heme b(out) + ADP + phosphate + H(+). Functionally, part of the ABC transporter complex CcmAB involved in the biogenesis of c-type cytochromes; once thought to export heme, this seems not to be the case, but its exact role is uncertain. Responsible for energy coupling to the transport system. This is Cytochrome c biogenesis ATP-binding export protein CcmA 1 from Cupriavidus metallidurans (strain ATCC 43123 / DSM 2839 / NBRC 102507 / CH34) (Ralstonia metallidurans).